The following is a 961-amino-acid chain: Retinoblastoma-like protein homolog lin-35 (961 aa).

Disordered regions lie at residues Met-1 to Lys-43 and Gly-55 to Pro-129. Over residues Glu-68–Asn-81 the composition is skewed to polar residues. Residues Gly-107–Ser-119 show a composition bias toward acidic residues. Ser-714 is modified (phosphoserine; by CDK4). At Thr-719 the chain carries Phosphothreonine; by CDK4.

It belongs to the retinoblastoma protein (RB) family. Component of the DRM complex, at least composed of lin-9, lin-35, lin-37, lin-52, lin-53, lin-54, dpl-1 and efl-1. Interacts with lin-53. Interacts (via C-terminus) with dpl-1 (via C-terminus) and efl-1 (via C-terminus). Interacts (via C-terminus) with lin-8. In terms of processing, phosphorylated by the cyclin dependent kinase cdk-4. Phosphorylation inhibits the transcriptional repressor activity of lin-35 and allows for progression through the G1 phase of the cell cycle during postembryonic development.

The protein resides in the nucleus. Its function is as follows. Key regulator of cell division which acts as a transcriptional repressor and negatively regulates cell cycle progression in its active unphosphorylated form, but allows cell cycle progression when phosphorylated. When unphosphorylated and in its active form, interacts with E2F transcription factors such as efl-1 to repress their transcriptional activity and negatively regulate the progression through the G1 phase of the cell cycle during postembryonic development. May furthermore act with cell cycle regulator cki-1 to negatively regulate cell cycle progression. Acts redundantly with lin-53, fzr-1 and lin-23 to control cell cycle progression by regulating the expression of G1 phase cyclins. In particular, negatively regulates the expression of the cyclin E homolog cye-1, which is essential for the G1/S phase transition. Regulates cell division in the intestinal lineage, repressing the expression of genes such as cdc-25.2, which are required for intestinal cells to transition from the karyokinesis cell cycle (also known as nuclear division) to endoreplication, a specific growth pathway in the intestinal epithelium required for feeding and gut development in growing larvae during the L1 stage molt. Its role as a transcriptional repressor in the regulation of intestinal cell division during postembryonic development is most likely in complex with an E2F cell cycle regulatory transcription factor efl-1 and its binding partner the synthetic multivulva class B protein dpl-1. Synthetic multivulva (synMuv) class B protein. SynMuv proteins are required to repress the induction of vulval development by Ras signaling and probably act by forming the multiprotein DRM complex that represses transcription. Together with synMuv class B protein lin-53, and redundantly with synMuv class A protein lin-15A, represses transcription to control vulval development, most likely through antagonization of the Ras-signaling pathway in the major hypodermal syncytium hyp7. Acts redundantly with the transcriptional corepressor spr-1 and the zinc finger protein zfp-2 to play a role in vulval morphogenesis, promote germline proliferation and somatic gonad development. Acts redundantly with ubc-18 in the regulation of pharyngeal morphogenesis during embryonic development by negatively regulating the expression of proteins such as sup-35. Functions with the SWI/SNF complex and proteins such as pha-1 to regulate larval development. Functions redundantly with xnp-1 to regulate somatic gonad development. Acts redundantly with slr-2 to regulate the expression of intestinal genes required for nutrient utilization. Regulates transcription in response to starvation. Furthermore, in response to starvation, promotes germ cell programmed cell death by negatively regulating the expression of the anti-apoptotic protein ced-9. Conversely, in conjunction with mcd-1, efl-1 and the synthetic multivulva class B proteins dpl-1, lin-37 and lin-52, may also regulate transcription to promote programmed cell death independently of ced-1, ced-8 and ced-9 cell death pathways. Directly involved in heterochromatin formation by maintaining overall chromatin structure and, in particular, that of constitutive heterochromatin by stabilizing histone methylation. In particular, negatively regulates the expression of mes-4, a histone methyltransferase that controls the expression of germline specific genes. May play a role in double strand break formation during meiosis. May suppress sensitivity to RNAi. May play a role in the response to endoplasmic reticulum (ER) stress. The protein is Retinoblastoma-like protein homolog lin-35 of Caenorhabditis elegans.